Consider the following 199-residue polypeptide: GTP-binding protein Di-Ras2 (199 aa).

Residues Gly-14–Ser-21, Arg-33–Thr-39, Asp-61–Ser-65, and Asn-121–Asp-124 each bind GTP. Residue Ser-35 is modified to Phosphoserine. The short motif at Tyr-36–Tyr-44 is the Effector region element. The residue at position 126 (Ser-126) is a Phosphoserine. Ala-152–Lys-153 provides a ligand contact to GTP. Position 196 is a cysteine methyl ester (Cys-196). Cys-196 carries S-geranylgeranyl cysteine lipidation. Residues Val-197 to Met-199 constitute a propeptide, removed in mature form.

Belongs to the small GTPase superfamily. Di-Ras family. In terms of processing, ubiquitinated by the ECS(ASB11) complex via 'Lys-11'-linked ubiquitin chains, leading to its degradation by the proteasome.

The protein localises to the cell membrane. It catalyses the reaction GTP + H2O = GDP + phosphate + H(+). Functionally, displays low GTPase activity and exists predominantly in the GTP-bound form. The protein is GTP-binding protein Di-Ras2 (DIRAS2) of Pongo abelii (Sumatran orangutan).